A 393-amino-acid chain; its full sequence is Erythronate-4-phosphate dehydrogenase (393 aa).

Residues S57 and T79 each coordinate substrate. NAD(+) is bound at residue D159. Residue R229 is part of the active site. NAD(+) is bound at residue D253. The active site involves E258. The Proton donor role is filled by H275. G278 is a binding site for NAD(+). Y279 is a substrate binding site.

It belongs to the D-isomer specific 2-hydroxyacid dehydrogenase family. PdxB subfamily. Homodimer.

Its subcellular location is the cytoplasm. The catalysed reaction is 4-phospho-D-erythronate + NAD(+) = (R)-3-hydroxy-2-oxo-4-phosphooxybutanoate + NADH + H(+). The protein operates within cofactor biosynthesis; pyridoxine 5'-phosphate biosynthesis; pyridoxine 5'-phosphate from D-erythrose 4-phosphate: step 2/5. Its function is as follows. Catalyzes the oxidation of erythronate-4-phosphate to 3-hydroxy-2-oxo-4-phosphonooxybutanoate. The protein is Erythronate-4-phosphate dehydrogenase of Colwellia psychrerythraea (strain 34H / ATCC BAA-681) (Vibrio psychroerythus).